The primary structure comprises 169 residues: S-ribosylhomocysteine lyase (169 aa).

Fe cation-binding residues include H54, H58, and C128.

The protein belongs to the LuxS family. Homodimer. The cofactor is Fe cation.

It catalyses the reaction S-(5-deoxy-D-ribos-5-yl)-L-homocysteine = (S)-4,5-dihydroxypentane-2,3-dione + L-homocysteine. Involved in the synthesis of autoinducer 2 (AI-2) which is secreted by bacteria and is used to communicate both the cell density and the metabolic potential of the environment. The regulation of gene expression in response to changes in cell density is called quorum sensing. Catalyzes the transformation of S-ribosylhomocysteine (RHC) to homocysteine (HC) and 4,5-dihydroxy-2,3-pentadione (DPD). In Shewanella pealeana (strain ATCC 700345 / ANG-SQ1), this protein is S-ribosylhomocysteine lyase.